We begin with the raw amino-acid sequence, 553 residues long: Putative transport protein ASA_0825 (553 aa).

A run of 5 helical transmembrane segments spans residues 4–24, 29–49, 65–85, 95–115, and 158–178; these read IALS…LGNW, VGLG…FAGV, FGLI…FFSS, GFAA…HQLF, and MGYA…MWLV. RCK C-terminal domains are found at residues 191 to 276 and 279 to 361; these read DLFE…VLGE and ETSL…VVGN. 6 helical membrane-spanning segments follow: residues 371 to 391, 403 to 425, 439 to 459, 465 to 485, 493 to 513, and 533 to 553; these read MLPV…PFYL, AGGP…LYWF, IVLF…DTLI, AWMM…GVLA, YLTL…LAFA, and LVMF…WAGV.

It belongs to the AAE transporter (TC 2.A.81) family. YidE subfamily.

It is found in the cell membrane. The protein is Putative transport protein ASA_0825 of Aeromonas salmonicida (strain A449).